Consider the following 825-residue polypeptide: Zinc finger protein 28 (825 aa).

The interval 26 to 65 is disordered; it reads RPGGGPAAGTVVAPGSPDRGRPRSRNSLASQDQQGAVTSG. Residues 33–42 are compositionally biased toward low complexity; it reads AGTVVAPGSP. Over residues 51 to 65 the composition is skewed to polar residues; the sequence is NSLASQDQQGAVTSG. The KRAB domain occupies 103–174; sequence VTFGDVAVVF…KRKMRKGQHL (72 aa). 14 consecutive C2H2-type zinc fingers follow at residues 377 to 399, 405 to 427, 433 to 456, 462 to 484, 490 to 512, 518 to 540, 546 to 568, 574 to 596, 602 to 624, 630 to 652, 658 to 680, 686 to 708, 714 to 736, and 742 to 764; these read FQCN…QRIH, YKCN…QRCH, YECP…RYYH, FDCI…RRIH, YTCE…QRIH, YECE…QRVH, FKCK…WRIH, FECG…QRIH, YECK…QKTH, YECK…QRVH, YKCL…RRLH, YECV…RRCH, YECS…QRIH, and YECK…KRVH. Residues 770–792 form a C2H2-type 15; degenerate zinc finger; it reads YNYKKGRRAFRQTAHFAHHQQIH.

Belongs to the krueppel C2H2-type zinc-finger protein family. As to expression, expressed predominantly in ovary.

The protein resides in the nucleus. In terms of biological role, may be involved in transcriptional regulation. May have a role in embryonic development. This chain is Zinc finger protein 28 (Zfp28), found in Mus musculus (Mouse).